A 554-amino-acid chain; its full sequence is Protein translocase subunit SecD (554 aa).

The next 6 membrane-spanning stretches (helical) occupy residues 10–30 (LVIL…MFYA), 392–412 (AGMV…IASY), 414–434 (LFGF…FAVM), 435–455 (GAIG…TIGT), 491–511 (AIID…VLGA), and 516–536 (GFAV…IWVV).

This sequence belongs to the SecD/SecF family. SecD subfamily. As to quaternary structure, forms a complex with SecF. Part of the essential Sec protein translocation apparatus which comprises SecA, SecYEG and auxiliary proteins SecDF-YajC and YidC.

It is found in the cell inner membrane. In terms of biological role, part of the Sec protein translocase complex. Interacts with the SecYEG preprotein conducting channel. SecDF uses the proton motive force (PMF) to complete protein translocation after the ATP-dependent function of SecA. This Rhodobacter capsulatus (strain ATCC BAA-309 / NBRC 16581 / SB1003) protein is Protein translocase subunit SecD.